The chain runs to 490 residues: ATP synthase subunit beta (490 aa).

Residue 173 to 180 participates in ATP binding; that stretch reads GGAGVGKT.

It belongs to the ATPase alpha/beta chains family. F-type ATPases have 2 components, CF(1) - the catalytic core - and CF(0) - the membrane proton channel. CF(1) has five subunits: alpha(3), beta(3), gamma(1), delta(1), epsilon(1). CF(0) has three main subunits: a(1), b(2) and c(9-12). The alpha and beta chains form an alternating ring which encloses part of the gamma chain. CF(1) is attached to CF(0) by a central stalk formed by the gamma and epsilon chains, while a peripheral stalk is formed by the delta and b chains.

The protein localises to the cell membrane. It catalyses the reaction ATP + H2O + 4 H(+)(in) = ADP + phosphate + 5 H(+)(out). Produces ATP from ADP in the presence of a proton gradient across the membrane. The catalytic sites are hosted primarily by the beta subunits. This is ATP synthase subunit beta from Bifidobacterium longum subsp. infantis (strain ATCC 15697 / DSM 20088 / JCM 1222 / NCTC 11817 / S12).